We begin with the raw amino-acid sequence, 63 residues long: MRIHYLLFSFLLVLLSPLSAFTQSINNPITCLTKGGVCWGPCTGGFRQIGTCGLPRVRCCKKK.

The N-terminal stretch at 1 to 22 (MRIHYLLFSFLLVLLSPLSAFT) is a signal peptide. Position 23 is a pyrrolidone carboxylic acid (Gln-23). 3 cysteine pairs are disulfide-bonded: Cys-31–Cys-59, Cys-38–Cys-52, and Cys-42–Cys-60.

Belongs to the beta-defensin family. Highly expressed in lung.

It is found in the secreted. Functionally, exhibits antimicrobial activity against Gram-negative bacteria and Gram-positive bacteria. May act as a ligand for C-C chemokine receptor CCR6. Binds to CCR6 and induces chemotactic activity of CCR6-expressing cells. This Rattus norvegicus (Rat) protein is Beta-defensin 4 (Defb4).